We begin with the raw amino-acid sequence, 518 residues long: Serine/threonine-protein kinase PRR1 (518 aa).

At M1 the chain carries N-acetylmethionine. The segment covering 1–12 has biased composition (polar residues); it reads MDEYSSIYSQPK. A disordered region spans residues 1 to 59; the sequence is MDEYSSIYSQPKTPRLKQEGFPDSIGDQHEKALIDENGEEDKKMASTEGTTGDSRSTPL. A compositionally biased stretch (basic and acidic residues) spans 16-45; it reads LKQEGFPDSIGDQHEKALIDENGEEDKKMA. The span at 47 to 59 shows a compositional bias: polar residues; sequence TEGTTGDSRSTPL. Residue S132 is modified to Phosphoserine. In terms of domain architecture, Protein kinase spans 192–508; that stretch reads WKKVRPIGSG…INEIYESPFV (317 aa). Residues 198–206 and K225 contribute to the ATP site; that span reads IGSGNFSTV. Catalysis depends on D354, which acts as the Proton acceptor.

This sequence belongs to the protein kinase superfamily. CAMK Ser/Thr protein kinase family. NIM1 subfamily.

It is found in the cytoplasm. The enzyme catalyses L-seryl-[protein] + ATP = O-phospho-L-seryl-[protein] + ADP + H(+). The catalysed reaction is L-threonyl-[protein] + ATP = O-phospho-L-threonyl-[protein] + ADP + H(+). Its function is as follows. Protein kinase that functions as a regulator in the pheromone-induced mating pathway downstream of mitogen-activated protein kinase (MAPK) FUS3. Diminishes transcriptional induction of genes in response to pheromone signaling. This is Serine/threonine-protein kinase PRR1 (PRR1) from Saccharomyces cerevisiae (strain ATCC 204508 / S288c) (Baker's yeast).